The chain runs to 143 residues: Anti-sigma F factor (143 aa).

Belongs to the anti-sigma-factor family.

The enzyme catalyses L-seryl-[protein] + ATP = O-phospho-L-seryl-[protein] + ADP + H(+). The catalysed reaction is L-threonyl-[protein] + ATP = O-phospho-L-threonyl-[protein] + ADP + H(+). Its function is as follows. Binds to sigma F and blocks its ability to form an RNA polymerase holoenzyme (E-sigma F). Phosphorylates SpoIIAA on a serine residue. This phosphorylation may enable SpoIIAA to act as an anti-anti-sigma factor that counteracts SpoIIAB and thus releases sigma F from inhibition. This is Anti-sigma F factor from Clostridium botulinum (strain Alaska E43 / Type E3).